A 485-amino-acid polypeptide reads, in one-letter code: GlcNAc-binding protein A (485 aa).

Positions 1 to 29 (MKKQPQKTLLAIALSVVSGTAMSHGYVSA) are cleaved as a signal peptide. Residues 30–200 (VENGVAEARV…SFYNVIDVKF (171 aa)) form the Chitin-binding type-4 domain. The 42-residue stretch at 437 to 478 (AGTKVLASDGAIYQCKPFPYSGYCVQWTPTATQYQPGTGSHW) folds into the Chitin-binding type-3 domain.

Belongs to the GbpA family.

Its subcellular location is the secreted. Probably interacts with GlcNAc residues. May promote attachment to both epithelial cell surfaces and chitin. This is GlcNAc-binding protein A from Vibrio vulnificus (strain YJ016).